The sequence spans 403 residues: Cystinosin homolog (403 aa).

Topologically, residues 1-122 (MKLPVSILFF…YSRITVIRSH (122 aa)) are lumenal. N-linked (GlcNAc...) asparagine glycans are attached at residues Asn-45, Asn-52, Asn-78, and Asn-96. A helical transmembrane segment spans residues 123–143 (WLAILIQIVGWTYFAAWSVSF). In terms of domain architecture, PQ-loop 1 spans 124–190 (LAILIQIVGW…MYYNSHVKNI (67 aa)). The Cytoplasmic segment spans residues 144–162 (YPQMYLNFKRKSVVGLNFD). Residues 163 to 183 (FLSLNLVGFGAYAMFNLLMYY) form a helical membrane-spanning segment. Topologically, residues 184-206 (NSHVKNIYSMENPRSPPPVLLND) are lumenal. The helical transmembrane segment at 207-227 (VVFAVHAFLACFVTILQCIFY) threads the bilayer. Topologically, residues 228–237 (ERDQQRISTK) are cytoplasmic. A helical transmembrane segment spans residues 238–258 (CIILIIGLVSFGFVSVVVTVL). Residues 259–260 (NK) are Lumenal-facing. The chain crosses the membrane as a helical span at residues 261–283 (ITILDFVVSLSYIKMAVTCCKYF). The region spanning 266-326 (FVVSLSYIKM…MVLQAINVND (61 aa)) is the PQ-loop 2 domain. Residues 284–294 (PQAYFNYQRKS) are Cytoplasmic-facing. Residues 295–315 (TVGWSIGNILLDFTGGSLDIL) form a helical membrane-spanning segment. At 316–336 (QMVLQAINVNDWSAFYANPVK) the chain is on the lumenal side. A helical transmembrane segment spans residues 337 to 357 (FGLGFVSIFFDIIFMIQHYAL). The Cytoplasmic segment spans residues 358 to 403 (YPDAEVPHNEYHGVDNPDPDSIVRDAEHGAADNESMESTDPIIVHD). Residues 374-388 (PDPDSIVRDAEHGAA) show a composition bias toward basic and acidic residues. The segment at 374–403 (PDPDSIVRDAEHGAADNESMESTDPIIVHD) is disordered.

Belongs to the cystinosin family.

It localises to the lysosome membrane. It is found in the cytoplasmic vesicle. The protein localises to the phagosome. The catalysed reaction is L-cystine(out) + H(+)(out) = L-cystine(in) + H(+)(in). In terms of biological role, cystine/H(+) symporter that mediates export of cystine, the oxidized dimer of cysteine, from lysosomes. May play a role in the degradation of engulfed apoptotic cells. The chain is Cystinosin homolog (ctns-1) from Caenorhabditis briggsae.